We begin with the raw amino-acid sequence, 98 residues long: NADH-ubiquinone oxidoreductase chain 4L (98 aa).

3 helical membrane passes run 1–21 (MPFI…GLLM), 29–49 (SLLC…LLCL), and 61–81 (MILL…LVMV).

Belongs to the complex I subunit 4L family. Core subunit of respiratory chain NADH dehydrogenase (Complex I) which is composed of 45 different subunits.

It is found in the mitochondrion inner membrane. The catalysed reaction is a ubiquinone + NADH + 5 H(+)(in) = a ubiquinol + NAD(+) + 4 H(+)(out). Functionally, core subunit of the mitochondrial membrane respiratory chain NADH dehydrogenase (Complex I) which catalyzes electron transfer from NADH through the respiratory chain, using ubiquinone as an electron acceptor. Part of the enzyme membrane arm which is embedded in the lipid bilayer and involved in proton translocation. The protein is NADH-ubiquinone oxidoreductase chain 4L (MT-ND4L) of Dugong dugon (Dugong).